The chain runs to 640 residues: Auxin efflux carrier component 3 (640 aa).

Residues 1-7 (MISWHDL) are Extracellular-facing. A helical membrane pass occupies residues 8–28 (YTVLTAVIPLYVAMILAYGSV). Residues 29 to 38 (RWWKIFSPDQ) are Cytoplasmic-facing. Residues 39–59 (CSGINRFVAIFAVPLLSFHFI) form a helical membrane-spanning segment. Val-51 provides a ligand contact to (indol-3-yl)acetate. Topologically, residues 60-71 (STNNPYAMNLRF) are extracellular. Residues 72 to 92 (IAADTLQKIIMLSLLVLWANF) traverse the membrane as a helical segment. Topologically, residues 93 to 101 (TRSGSLEWS) are cytoplasmic. The helical transmembrane segment at 102 to 122 (ITIFSLSTLPNTLVMGIPLLI) threads the bilayer. Asn-112 and Leu-114 together coordinate (indol-3-yl)acetate. Over 123-131 (AMYGEYSGS) the chain is Extracellular. Residues 132 to 152 (LMVQIVVLQCIIWYTLLLFLF) traverse the membrane as a helical segment. Tyr-145 contributes to the (indol-3-yl)acetate binding site. The Cytoplasmic segment spans residues 153–500 (EFRGAKMLIM…LIRNPNTYSS (348 aa)). Ser-226, Ser-243, and Ser-283 each carry phosphoserine. A disordered region spans residues 310-351 (APNPEFSSTTTSTANKSVNKNPKDVNTNQQTTLPTGGKSNSH). The segment covering 314 to 348 (EFSSTTTSTANKSVNKNPKDVNTNQQTTLPTGGKS) has biased composition (polar residues). Thr-322 is subject to Phosphothreonine. The residue at position 366 (Ser-366) is a Phosphoserine. Disordered stretches follow at residues 372-391 (AGLN…RSDQ) and 404-471 (SHNG…SQRK). A compositionally biased stretch (basic and acidic residues) spans 430–442 (GKEEEAERPKDAE). Polar residues predominate over residues 449–460 (APNSTAALQSKT). The helical transmembrane segment at 501-521 (LIGLIWALVAFRWHVAMPKII) threads the bilayer. Over 522-524 (QQS) the chain is Extracellular. A helical membrane pass occupies residues 525 to 545 (ISILSDAGLGMAMFSLGLFMA). Residues 546 to 559 (LQPKLIACGNSVAT) are Cytoplasmic-facing. The chain crosses the membrane as a helical span at residues 560-580 (FAMAVRFLTGPAVMAVAAIAI). Over 581-585 (GLRGD) the chain is Extracellular. A helical membrane pass occupies residues 586–606 (LLRVAIVQAALPQGIVPFVFA). The (indol-3-yl)acetate site is built by Ile-600 and Val-601. Topologically, residues 607 to 619 (KEYNVHPAILSTG) are cytoplasmic. Residues 620–640 (VIFGMLIALPITLVYYILLGL) form a helical membrane-spanning segment.

It belongs to the auxin efflux carrier (TC 2.A.69.1) family. Homodimer. Predominantly expressed at the lateral side of shoot endodermis cells as well as root pericycle and columella cells.

Its subcellular location is the cell membrane. Its activity is regulated as follows. Auxin efflux carrier activity is competitively inhibited by naptalamate (N-1-naphthylphthalamic acid, NPA). Acts as a component of the auxin efflux carrier; this activity is enhanced when activated by PID-mediated phosphorylation. Seems to be involved in the lateral auxin transport system. Together with PIN4 and PIN7, involved in the connective auxin transport (CAT) that ensures communication across the shoot system, and modulates strigolactone-mediated shoot branching control. Binds auxins including indole-3-acetic acid (IAA). Coordinated polar localization of PIN3 is directly regulated by the vesicle trafficking process. This is Auxin efflux carrier component 3 from Arabidopsis thaliana (Mouse-ear cress).